The chain runs to 2209 residues: RNA-directed RNA polymerase L (2209 aa).

Positions 26-284 (KVTFLSQVHP…AHLDSDVSSC (259 aa)) are endonuclease. Residues Glu51, Asp89, and Glu102 each coordinate Mn(2+). Residue Lys115 is part of the active site. The RdRp catalytic domain occupies 1172–1369 (CDMKMAVNNG…FLSSKLNKFV (198 aa)). Asp1330 is a binding site for Mg(2+).

This sequence belongs to the Bunyavirales RNA polymerase family. Homomultimer; the oligomeric structure is essential for the polymerase activity. Interacts with nucleoprotein N. Interacts with protein Z; this interaction inhibits viral transcription and replication, Z partially blocks the product exit tunnel for the releasing nascent RNA product. Mn(2+) is required as a cofactor. It depends on Mg(2+) as a cofactor.

The protein localises to the virion. It is found in the host cytoplasm. The catalysed reaction is RNA(n) + a ribonucleoside 5'-triphosphate = RNA(n+1) + diphosphate. RNA-dependent RNA polymerase, which is responsible for the replication and transcription of the viral RNA genome using antigenomic RNA as an intermediate. During transcription, synthesizes subgenomic RNAs and assures their capping by a cap-snatching mechanism, which involves the endonuclease activity cleaving the host capped pre-mRNAs. These short capped RNAs are then used as primers for viral transcription. The 3'-end of subgenomic mRNAs molecules are heterogeneous and not polyadenylated. The replicase function is to direct synthesis of antigenomic and genomic RNA which are encapsidated and non capped. As a consequence of the use of the same enzyme for both transcription and replication, these mechanisms need to be well coordinated. These processes may be regulated by proteins N and Z in a dose-dependent manner. Z protein inhibits the viral polymerase L und thus the viral transcription and RNA synthesis. This chain is RNA-directed RNA polymerase L, found in Calomys callosus (Large vesper mouse).